Reading from the N-terminus, the 276-residue chain is Formamidopyrimidine-DNA glycosylase (276 aa).

The active-site Schiff-base intermediate with DNA is proline 2. Glutamate 3 (proton donor) is an active-site residue. Lysine 58 functions as the Proton donor; for beta-elimination activity in the catalytic mechanism. Residues histidine 92, arginine 111, and lysine 154 each contribute to the DNA site. An FPG-type zinc finger spans residues 239–273; the sequence is QVYGHAGEECNNCGTILEKIKVNGRGTTFCPHCQV. The active-site Proton donor; for delta-elimination activity is arginine 263.

The protein belongs to the FPG family. In terms of assembly, monomer. Zn(2+) is required as a cofactor.

The enzyme catalyses Hydrolysis of DNA containing ring-opened 7-methylguanine residues, releasing 2,6-diamino-4-hydroxy-5-(N-methyl)formamidopyrimidine.. The catalysed reaction is 2'-deoxyribonucleotide-(2'-deoxyribose 5'-phosphate)-2'-deoxyribonucleotide-DNA = a 3'-end 2'-deoxyribonucleotide-(2,3-dehydro-2,3-deoxyribose 5'-phosphate)-DNA + a 5'-end 5'-phospho-2'-deoxyribonucleoside-DNA + H(+). Functionally, involved in base excision repair of DNA damaged by oxidation or by mutagenic agents. Acts as a DNA glycosylase that recognizes and removes damaged bases. Has a preference for oxidized purines, such as 7,8-dihydro-8-oxoguanine (8-oxoG). Has AP (apurinic/apyrimidinic) lyase activity and introduces nicks in the DNA strand. Cleaves the DNA backbone by beta-delta elimination to generate a single-strand break at the site of the removed base with both 3'- and 5'-phosphates. This is Formamidopyrimidine-DNA glycosylase from Lactobacillus johnsonii (strain CNCM I-12250 / La1 / NCC 533).